A 53-amino-acid polypeptide reads, in one-letter code: Sec-independent protein translocase protein TatA (53 aa).

A helical transmembrane segment spans residues 1-21; that stretch reads MGMSFSHLLIVLLIIFVLFGA.

The protein belongs to the TatA/E family. The Tat system comprises two distinct complexes: a TatABC complex, containing multiple copies of TatA, TatB and TatC subunits, and a separate TatA complex, containing only TatA subunits. Substrates initially bind to the TatABC complex, which probably triggers association of the separate TatA complex to form the active translocon.

The protein resides in the cell inner membrane. Its function is as follows. Part of the twin-arginine translocation (Tat) system that transports large folded proteins containing a characteristic twin-arginine motif in their signal peptide across membranes. TatA could form the protein-conducting channel of the Tat system. This is Sec-independent protein translocase protein TatA from Rickettsia typhi (strain ATCC VR-144 / Wilmington).